We begin with the raw amino-acid sequence, 158 residues long: Cyclic pyranopterin monophosphate synthase (158 aa).

Residues 76–78 (MCH) and 114–115 (ME) each bind substrate. Aspartate 129 is an active-site residue.

It belongs to the MoaC family. Homohexamer; trimer of dimers.

It catalyses the reaction (8S)-3',8-cyclo-7,8-dihydroguanosine 5'-triphosphate = cyclic pyranopterin phosphate + diphosphate. It participates in cofactor biosynthesis; molybdopterin biosynthesis. Its function is as follows. Catalyzes the conversion of (8S)-3',8-cyclo-7,8-dihydroguanosine 5'-triphosphate to cyclic pyranopterin monophosphate (cPMP). The chain is Cyclic pyranopterin monophosphate synthase from Clostridium perfringens (strain SM101 / Type A).